We begin with the raw amino-acid sequence, 104 residues long: MSHTILLVQPTKRPEGRTYADYESVNECMEGVCKMYEEHLKRMNPNSPSITYDISQLFDFVDDLADLSCLVYRADTQTYQPYNKDWIKEKIYVLLRRQAQQAGK.

It belongs to the E(R) family. Homodimer.

It is found in the nucleus. Its function is as follows. May have a role in the cell cycle. This Danio rerio (Zebrafish) protein is Enhancer of rudimentary homolog (erh).